The sequence spans 579 residues: Arginine--tRNA ligase (579 aa).

The 'HIGH' region motif lies at Ala136–His146.

It belongs to the class-I aminoacyl-tRNA synthetase family. Monomer.

The protein resides in the cytoplasm. The catalysed reaction is tRNA(Arg) + L-arginine + ATP = L-arginyl-tRNA(Arg) + AMP + diphosphate. The protein is Arginine--tRNA ligase of Anaplasma marginale (strain St. Maries).